Here is a 348-residue protein sequence, read N- to C-terminus: Protein RecA (348 aa).

66-73 serves as a coordination point for ATP; the sequence is GPESSGKT.

It belongs to the RecA family.

The protein localises to the cytoplasm. Its function is as follows. Can catalyze the hydrolysis of ATP in the presence of single-stranded DNA, the ATP-dependent uptake of single-stranded DNA by duplex DNA, and the ATP-dependent hybridization of homologous single-stranded DNAs. It interacts with LexA causing its activation and leading to its autocatalytic cleavage. The protein is Protein RecA of Neisseria gonorrhoeae (strain NCCP11945).